The primary structure comprises 239 residues: Probable transcriptional regulatory protein Tcr_1104 (239 aa).

This sequence belongs to the TACO1 family.

The protein resides in the cytoplasm. This Hydrogenovibrio crunogenus (strain DSM 25203 / XCL-2) (Thiomicrospira crunogena) protein is Probable transcriptional regulatory protein Tcr_1104.